We begin with the raw amino-acid sequence, 687 residues long: MVELSFSQLLVLLLSLLFLFTTLASSSKTPRFKYSLEKPHHPLDPLTTPEIKRVQTILSGHDPGFGSGSTIIHAMALDEPDKQRVIRWKKGDRLPPRRAEILAMSNGESHVLTVDLKSGRVVSDLVNPTFGYPILTMKDIIAVSQVPYKSVEFNRSIEARGIPFSGLICITPFAGWYGPDEEGRRVIKIQCFSKQDTVNFYMRPIEGLYLTVDMDKLEIIKIVDNGPVPVPKSTGTEYRYGFLNETVYMDRVNPMSMEQPDGPSFQVEDGYLVKWANWKFHIKPDQRAGMIISQATVRDSKTGEARSVMYKGFASELFVPNMDPGEGWYSKAYMDAGEFGLGPSSMPLVPLNDCPRNAYYIDGFFASPEGIPILQPNMICLFERYAGDTSWRHSEILLPGVDIRESRAKVTLVARMACSVGNYDYIFDWEFQMDGVIRVTVAASGMLMVKGTAYENVEDLGEKEDDSGPLISENVIGVVHDHFISFHLDMDIDGSANNSFVKVHLEKQRLPPGESRRKSYLKVKKYVAKTEKDAQIKMSLYDPYEFHLVNPNRLSRLGNPAGYKLVPGGNAASLLDHDDPPQMRGAFTNNQIWVTRYNRSEQWAGGLLMYQSRGEDTLQVWSDRDRSIENKDIVLWYTLGFHHVPCQEDFPVMPTIASSFELKPVNFFESNPVLGISPFFEKDLPVC.

The first 24 residues, Met1–Ala24, serve as a signal peptide directing secretion. Asn154 carries N-linked (GlcNAc...) asparagine glycosylation. Cys169 and Cys191 are joined by a disulfide. A glycan (N-linked (GlcNAc...) asparagine) is linked at Asn244. Tyr333 to Ser344 lines the substrate pocket. Residue Asp335 is the Proton acceptor of the active site. A disulfide bridge links Cys354 with Cys380. A substrate-binding site is contributed by Val420–Tyr425. The active-site Schiff-base intermediate with substrate; via topaquinone is Tyr423. Residue Tyr423 is modified to 2',4',5'-topaquinone. Residues His480 and His482 each coordinate Cu cation. Mn(2+)-binding residues include Asp489, Met490, and Asp491. N-linked (GlcNAc...) asparagine glycans are attached at residues Asn497 and Asn598. The Mn(2+) site is built by Asp632 and Ile633. His643 serves as a coordination point for Cu cation.

Belongs to the copper/topaquinone oxidase family. Homodimer. Cu cation serves as cofactor. Zn(2+) is required as a cofactor. Requires L-topaquinone as cofactor. The cofactor is Mn(2+). Post-translationally, topaquinone (TPQ) is generated by copper-dependent autoxidation of a specific tyrosyl residue. Expressed in roots, leaves and cotyledons.

Its subcellular location is the secreted. It localises to the extracellular space. It is found in the apoplast. It carries out the reaction a primary methyl amine + O2 + H2O = an aldehyde + H2O2 + NH4(+). It participates in amine and polyamine degradation; putrescine degradation. Its function is as follows. Copper amine oxidase that can use putrescine and spermidine as substrates. This chain is Amine oxidase [copper-containing] gamma 2, found in Arabidopsis thaliana (Mouse-ear cress).